The chain runs to 347 residues: MTFDFMLKYSFDKVMDDVQLLVSRLRAREESVDILRQQLCKLQAQLLSMRQCQETILEFDEFSKRVSNQPKGPLIICLAAENKQLEQLKIENKTLRNSLDEHQTALDMIMTKYRGQISKLMRTYQVEHLVQSVINPDNNENRCIKSFYPGPKSVNTPSTNSIDSQSVSQKSNSGKVDEITDGISQSLTEQFTTVASIVRDVTDRGDAYATELEEELHRLRSENAGLREILMISSDCCPDTNSNDCVLPPVSLPNKDSIQHESSSLSSIQSGRFHFLDEDSSSIHLPGIDECLSSVNVNEDSFLYNIPNPSDDSSNSGTISGNHSDEDSDEDDNTVYEVAMNQMINSL.

Residues 76–109 (ICLAAENKQLEQLKIENKTLRNSLDEHQTALDMI) are a coiled coil. Residues 149-177 (PGPKSVNTPSTNSIDSQSVSQKSNSGKVD) are disordered. The span at 153 to 174 (SVNTPSTNSIDSQSVSQKSNSG) shows a compositional bias: polar residues. Residues 206–233 (DAYATELEEELHRLRSENAGLREILMIS) are a coiled coil. The interval 303-332 (LYNIPNPSDDSSNSGTISGNHSDEDSDEDD) is disordered. A compositionally biased stretch (low complexity) spans 307 to 316 (PNPSDDSSNS).

Belongs to the SIKE family. O-glycosylated.

Functionally, involved in protection of the schistosome gut. This is Circulating cathodic antigen from Schistosoma mansoni (Blood fluke).